Reading from the N-terminus, the 290-residue chain is Bifunctional protein FolD (290 aa).

Residues 167–169, Ser192, and Ile233 contribute to the NADP(+) site; that span reads GRS.

It belongs to the tetrahydrofolate dehydrogenase/cyclohydrolase family. Homodimer.

The catalysed reaction is (6R)-5,10-methylene-5,6,7,8-tetrahydrofolate + NADP(+) = (6R)-5,10-methenyltetrahydrofolate + NADPH. It catalyses the reaction (6R)-5,10-methenyltetrahydrofolate + H2O = (6R)-10-formyltetrahydrofolate + H(+). Its pathway is one-carbon metabolism; tetrahydrofolate interconversion. Its function is as follows. Catalyzes the oxidation of 5,10-methylenetetrahydrofolate to 5,10-methenyltetrahydrofolate and then the hydrolysis of 5,10-methenyltetrahydrofolate to 10-formyltetrahydrofolate. The polypeptide is Bifunctional protein FolD (Azorhizobium caulinodans (strain ATCC 43989 / DSM 5975 / JCM 20966 / LMG 6465 / NBRC 14845 / NCIMB 13405 / ORS 571)).